The primary structure comprises 598 residues: Aspartate--tRNA(Asp/Asn) ligase (598 aa).

Glu170 provides a ligand contact to L-aspartate. Positions 194–197 (QLFK) are aspartate. Arg216 serves as a coordination point for L-aspartate. ATP contacts are provided by residues 216–218 (RDE) and Gln225. His448 contacts L-aspartate. Glu482 contacts ATP. Arg489 is an L-aspartate binding site. 534–537 (GWDR) serves as a coordination point for ATP. The interval 558-598 (GGGVDPLTDAPAPITPQQRKESGIDAKPREDKPKEDAKSKA) is disordered. Over residues 575–598 (QRKESGIDAKPREDKPKEDAKSKA) the composition is skewed to basic and acidic residues.

It belongs to the class-II aminoacyl-tRNA synthetase family. Type 1 subfamily. Homodimer.

The protein localises to the cytoplasm. It carries out the reaction tRNA(Asx) + L-aspartate + ATP = L-aspartyl-tRNA(Asx) + AMP + diphosphate. Aspartyl-tRNA synthetase with relaxed tRNA specificity since it is able to aspartylate not only its cognate tRNA(Asp) but also tRNA(Asn). Reaction proceeds in two steps: L-aspartate is first activated by ATP to form Asp-AMP and then transferred to the acceptor end of tRNA(Asp/Asn). The sequence is that of Aspartate--tRNA(Asp/Asn) ligase from Mycolicibacterium smegmatis (strain ATCC 700084 / mc(2)155) (Mycobacterium smegmatis).